Reading from the N-terminus, the 298-residue chain is MSETGLLNPASIRRIADQIGLRPTKTRGQNFVHDANTVRRIVSLAQVGAADRVIEVGPGLGSLTLGLLETGAEVVAIEIDEVLANQLPGTVAERMPGAAERLEVVLSDALDVKVIPGAEPTALVANLPYNVAVPVLLHMLAICPQWSTGVVMVQSEVADRLVAAPGSKIYGVPSAKLAWYAEAIRVGNVPPTVFWPVPNVDSGLVRITRRRPPHVDGRDPRVTRSQVFRVVDAAFASRRKMLRSALAGLCGGSMAASELITAAGIDPTARGEALDIGDLARVVEALAQAGALSDSGQV.

Residues asparagine 30, valine 32, glycine 57, glutamate 78, aspartate 108, and asparagine 126 each contribute to the S-adenosyl-L-methionine site.

The protein belongs to the class I-like SAM-binding methyltransferase superfamily. rRNA adenine N(6)-methyltransferase family. RsmA subfamily.

The protein localises to the cytoplasm. It carries out the reaction adenosine(1518)/adenosine(1519) in 16S rRNA + 4 S-adenosyl-L-methionine = N(6)-dimethyladenosine(1518)/N(6)-dimethyladenosine(1519) in 16S rRNA + 4 S-adenosyl-L-homocysteine + 4 H(+). Specifically dimethylates two adjacent adenosines (A1518 and A1519) in the loop of a conserved hairpin near the 3'-end of 16S rRNA in the 30S particle. May play a critical role in biogenesis of 30S subunits. The sequence is that of Ribosomal RNA small subunit methyltransferase A from Cutibacterium acnes (strain DSM 16379 / KPA171202) (Propionibacterium acnes).